An 802-amino-acid chain; its full sequence is Phenylalanine--tRNA ligase beta subunit (802 aa).

One can recognise a tRNA-binding domain in the interval 40–149; the sequence is RPELDFVKIV…EGAEIGKTIR (110 aa). The B5 domain maps to 407–484; that stretch reads HKEVRIHTDI…RTRGYDTIQV (78 aa). 4 residues coordinate Mg(2+): aspartate 462, aspartate 468, glutamate 471, and glutamate 472. In terms of domain architecture, FDX-ACB spans 710 to 802; that stretch reads SQFPEAEIDI…LAGKNGFVLR (93 aa).

This sequence belongs to the phenylalanyl-tRNA synthetase beta subunit family. Type 1 subfamily. Tetramer of two alpha and two beta subunits. The cofactor is Mg(2+).

Its subcellular location is the cytoplasm. The catalysed reaction is tRNA(Phe) + L-phenylalanine + ATP = L-phenylalanyl-tRNA(Phe) + AMP + diphosphate + H(+). The chain is Phenylalanine--tRNA ligase beta subunit from Leptospira borgpetersenii serovar Hardjo-bovis (strain L550).